A 495-amino-acid polypeptide reads, in one-letter code: Glycerol kinase (495 aa).

T16 serves as a coordination point for ADP. T16 and T17 together coordinate ATP. T16 contributes to the sn-glycerol 3-phosphate binding site. R20 serves as a coordination point for ADP. Residues R86, E87, Y138, and D246 each coordinate sn-glycerol 3-phosphate. Positions 86, 87, 138, 246, and 247 each coordinate glycerol. The ADP site is built by T268 and G316. The ATP site is built by T268, G316, Q320, and G417. The ADP site is built by G417 and N421.

Belongs to the FGGY kinase family.

It catalyses the reaction glycerol + ATP = sn-glycerol 3-phosphate + ADP + H(+). It participates in polyol metabolism; glycerol degradation via glycerol kinase pathway; sn-glycerol 3-phosphate from glycerol: step 1/1. With respect to regulation, inhibited by fructose 1,6-bisphosphate (FBP). Its function is as follows. Key enzyme in the regulation of glycerol uptake and metabolism. Catalyzes the phosphorylation of glycerol to yield sn-glycerol 3-phosphate. The protein is Glycerol kinase of Synechocystis sp. (strain ATCC 27184 / PCC 6803 / Kazusa).